We begin with the raw amino-acid sequence, 546 residues long: Protein RDR1 (546 aa).

The segment at residues 20–46 is a DNA-binding region (zn(2)-C6 fungal-type); the sequence is CVPCRERKRKCNGKSPCEMCVAYGYVC.

Its subcellular location is the nucleus. Its function is as follows. Transcriptional repressor of multidrug resistance genes, such as PDR5. Required for growth on non-fermentable carbon sources like lactate or glycerol. This is Protein RDR1 (RDR1) from Saccharomyces cerevisiae (strain ATCC 204508 / S288c) (Baker's yeast).